The sequence spans 130 residues: Small ribosomal subunit protein uS9 (130 aa).

It belongs to the universal ribosomal protein uS9 family.

In Clostridium beijerinckii (strain ATCC 51743 / NCIMB 8052) (Clostridium acetobutylicum), this protein is Small ribosomal subunit protein uS9.